The sequence spans 160 residues: Dihydrofolate reductase (160 aa).

The DHFR domain maps to 2–159 (TFSLIVATTL…YDCRFLILTR (158 aa)). Ile6 is a binding site for substrate. NADP(+)-binding positions include Ala8 and 14–20 (VIGKDNQ). Asp28 is a substrate binding site. 46-47 (KT) is an NADP(+) binding site. Arg53 and Arg58 together coordinate substrate. NADP(+)-binding positions include 64-65 (SR) and 96-103 (GGGELFKQ). Thr114 contacts substrate.

This sequence belongs to the dihydrofolate reductase family.

The enzyme catalyses (6S)-5,6,7,8-tetrahydrofolate + NADP(+) = 7,8-dihydrofolate + NADPH + H(+). It participates in cofactor biosynthesis; tetrahydrofolate biosynthesis; 5,6,7,8-tetrahydrofolate from 7,8-dihydrofolate: step 1/1. Functionally, key enzyme in folate metabolism. Catalyzes an essential reaction for de novo glycine and purine synthesis, and for DNA precursor synthesis. The chain is Dihydrofolate reductase (folA) from Haemophilus influenzae (strain ATCC 51907 / DSM 11121 / KW20 / Rd).